Here is a 714-residue protein sequence, read N- to C-terminus: MEMASAFTLNVRLDNIAIITIDVPDEKMNTLKAEFASQVRAIIKQLRENKELRGVVFISAKPDNFIAGADINMIGNCKTAQEAEALARQGQQLMAEIHALPIPVIAAIHGACLGGGLELALACHGRVCTDDPKTVLGLPEVQLGLLPGSGGTQRLPRLIGVSTALEMILTGKQLRAKQALKLGLVDDVVPHSILLEAAVELAKKDRPSSRPLPVRERILAGPLGRALLFKMVGKKTEHKTQGNYPATERILEVVETGLAQGTSSGYDAEARAFGELAMTPQSQALRSIFFASTDVKKDPGSDAPPAPLNSVGILGGGLMGGGIAYVTACKAGLPVRIKDINPQGINHALKYSWDQLEGKVRRRHLKASERDKQLALISGTTDYRGFAHRDLIIEAVFENLELKQQMVAEVEQNCAAHTIFASNTSSLPIGDIAAHAARPEQVIGLHFFSPVEKMPLVEIIPHAGTSAQTIATTVKLAKKQGKTPIVVRDKAGFYVNRILAPYINEAIRMLTEGERVEHIDAALVKFGFPVGPIQLLDEVGIDTGTKIIPVLEAAYGERFSAPANVVSSILNDDRKGRKNGRGFYLYGQKGRKSKKQVDPAIYPLIGAQGQGRLSAPQVAERCVMLMLNEAVRCVDEQVIRSVRDGDIGAVFGIGFPPFLGGPFRYIDSLGAGEVVAIMQRLATQYGSRFTPCERLVEMGARGESFWKTTATDLQ.

The tract at residues 1-190 (MEMASAFTLN…KLGLVDDVVP (190 aa)) is enoyl-CoA hydratase. Residues 306–714 (APLNSVGILG…FWKTTATDLQ (409 aa)) are 3-hydroxyacyl-CoA dehydrogenase.

The protein in the N-terminal section; belongs to the enoyl-CoA hydratase/isomerase family. This sequence in the central section; belongs to the 3-hydroxyacyl-CoA dehydrogenase family. Heterotetramer of two alpha chains (FadJ) and two beta chains (FadI).

It localises to the cytoplasm. It catalyses the reaction a (3S)-3-hydroxyacyl-CoA = a (2E)-enoyl-CoA + H2O. The enzyme catalyses a 4-saturated-(3S)-3-hydroxyacyl-CoA = a (3E)-enoyl-CoA + H2O. The catalysed reaction is a (3S)-3-hydroxyacyl-CoA + NAD(+) = a 3-oxoacyl-CoA + NADH + H(+). It carries out the reaction (3S)-3-hydroxybutanoyl-CoA = (3R)-3-hydroxybutanoyl-CoA. Its pathway is lipid metabolism; fatty acid beta-oxidation. In terms of biological role, catalyzes the formation of a hydroxyacyl-CoA by addition of water on enoyl-CoA. Also exhibits 3-hydroxyacyl-CoA epimerase and 3-hydroxyacyl-CoA dehydrogenase activities. The polypeptide is Fatty acid oxidation complex subunit alpha (Shigella flexneri).